The sequence spans 598 residues: Beta-hexosaminidase A (598 aa).

The first 11 residues, 1-11, serve as a signal peptide directing secretion; it reads MSFITSAHATA. Aspartate 305 is an active-site residue.

It belongs to the glycosyl hydrolase 3 family.

It carries out the reaction Hydrolysis of terminal non-reducing N-acetyl-D-hexosamine residues in N-acetyl-beta-D-hexosaminides.. Functionally, most active towards p-nitrophenyl-N-acetyl-beta-D-glucosaminide(PNP-beta-GlcNAc) and diacetylchitobiose. The protein is Beta-hexosaminidase A (cht60) of Pseudoalteromonas piscicida.